The sequence spans 335 residues: Holliday junction branch migration complex subunit RuvB (335 aa).

Residues 1-181 (MDRIVEIEKY…FGMQFRLEFY (181 aa)) form a large ATPase domain (RuvB-L) region. Position 20 (Leu-20) interacts with ATP. ADP contacts are provided by Arg-21, Tyr-28, Ile-29, Gly-62, Leu-63, Gly-64, Lys-65, Thr-66, and Thr-67. ATP is bound by residues 128–130 (EDY) and Arg-171. The ADP site is built by Tyr-181 and Arg-218. A small ATPAse domain (RuvB-S) region spans residues 182–252 (KDSELALILQ…RANEALNSLG (71 aa)). Residues 255–335 (ELGFDAMDLR…LNYEKTLFEE (81 aa)) are head domain (RuvB-H). Residues Arg-309 and Arg-314 each coordinate DNA.

This sequence belongs to the RuvB family. As to quaternary structure, homohexamer. Forms an RuvA(8)-RuvB(12)-Holliday junction (HJ) complex. HJ DNA is sandwiched between 2 RuvA tetramers; dsDNA enters through RuvA and exits via RuvB. An RuvB hexamer assembles on each DNA strand where it exits the tetramer. Each RuvB hexamer is contacted by two RuvA subunits (via domain III) on 2 adjacent RuvB subunits; this complex drives branch migration. In the full resolvosome a probable DNA-RuvA(4)-RuvB(12)-RuvC(2) complex forms which resolves the HJ.

It is found in the cytoplasm. It catalyses the reaction ATP + H2O = ADP + phosphate + H(+). The RuvA-RuvB-RuvC complex processes Holliday junction (HJ) DNA during genetic recombination and DNA repair, while the RuvA-RuvB complex plays an important role in the rescue of blocked DNA replication forks via replication fork reversal (RFR). RuvA specifically binds to HJ cruciform DNA, conferring on it an open structure. The RuvB hexamer acts as an ATP-dependent pump, pulling dsDNA into and through the RuvAB complex. RuvB forms 2 homohexamers on either side of HJ DNA bound by 1 or 2 RuvA tetramers; 4 subunits per hexamer contact DNA at a time. Coordinated motions by a converter formed by DNA-disengaged RuvB subunits stimulates ATP hydrolysis and nucleotide exchange. Immobilization of the converter enables RuvB to convert the ATP-contained energy into a lever motion, pulling 2 nucleotides of DNA out of the RuvA tetramer per ATP hydrolyzed, thus driving DNA branch migration. The RuvB motors rotate together with the DNA substrate, which together with the progressing nucleotide cycle form the mechanistic basis for DNA recombination by continuous HJ branch migration. Branch migration allows RuvC to scan DNA until it finds its consensus sequence, where it cleaves and resolves cruciform DNA. The sequence is that of Holliday junction branch migration complex subunit RuvB from Campylobacter jejuni subsp. jejuni serotype O:2 (strain ATCC 700819 / NCTC 11168).